The chain runs to 326 residues: Phospho-N-acetylmuramoyl-pentapeptide-transferase (326 aa).

10 helical membrane passes run 3–23, 51–71, 77–97, 113–133, 143–163, 175–195, 199–219, 225–245, 250–270, and 306–326; these read LPTK…PYFI, TPTM…LFWV, ILLL…DDYL, ILIQ…YFTE, GIMI…VVGS, GLAA…AYMT, ISVI…LWFN, IFMG…TSVL, VLFA…VIQV, and IVIK…AFLL.

The protein belongs to the glycosyltransferase 4 family. MraY subfamily. Requires Mg(2+) as cofactor.

Its subcellular location is the cell membrane. The catalysed reaction is UDP-N-acetyl-alpha-D-muramoyl-L-alanyl-gamma-D-glutamyl-meso-2,6-diaminopimeloyl-D-alanyl-D-alanine + di-trans,octa-cis-undecaprenyl phosphate = di-trans,octa-cis-undecaprenyl diphospho-N-acetyl-alpha-D-muramoyl-L-alanyl-D-glutamyl-meso-2,6-diaminopimeloyl-D-alanyl-D-alanine + UMP. Its pathway is cell wall biogenesis; peptidoglycan biosynthesis. In terms of biological role, catalyzes the initial step of the lipid cycle reactions in the biosynthesis of the cell wall peptidoglycan: transfers peptidoglycan precursor phospho-MurNAc-pentapeptide from UDP-MurNAc-pentapeptide onto the lipid carrier undecaprenyl phosphate, yielding undecaprenyl-pyrophosphoryl-MurNAc-pentapeptide, known as lipid I. This chain is Phospho-N-acetylmuramoyl-pentapeptide-transferase, found in Wolbachia sp. subsp. Brugia malayi (strain TRS).